Here is a 349-residue protein sequence, read N- to C-terminus: ATPase GET3 (349 aa).

Residue 26 to 33 coordinates ATP; it reads KGGVGKTT. D57 is a catalytic residue. Residues E242 and N269 each coordinate ATP. C281 and C284 together coordinate Zn(2+).

The protein belongs to the arsA ATPase family. In terms of assembly, homodimer. Component of the Golgi to ER traffic (GET) complex, which is composed of GET1, GET2 and GET3. Within the complex, GET1 and GET2 form a heterotetramer which is stabilized by phosphatidylinositol binding and which binds to the GET3 homodimer. Interacts with the chloride channel protein GEF1.

It is found in the cytoplasm. The protein resides in the endoplasmic reticulum. Its subcellular location is the golgi apparatus. Its function is as follows. ATPase required for the post-translational delivery of tail-anchored (TA) proteins to the endoplasmic reticulum. Recognizes and selectively binds the transmembrane domain of TA proteins in the cytosol. This complex then targets to the endoplasmic reticulum by membrane-bound receptors GET1 and GET2, where the tail-anchored protein is released for insertion. This process is regulated by ATP binding and hydrolysis. ATP binding drives the homodimer towards the closed dimer state, facilitating recognition of newly synthesized TA membrane proteins. ATP hydrolysis is required for insertion. Subsequently, the homodimer reverts towards the open dimer state, lowering its affinity for the GET1-GET2 receptor, and returning it to the cytosol to initiate a new round of targeting. Cooperates with the HDEL receptor ERD2 to mediate the ATP-dependent retrieval of resident ER proteins that contain a C-terminal H-D-E-L retention signal from the Golgi to the ER. Involved in low-level resistance to the oxyanions arsenite and arsenate, and in heat tolerance. The protein is ATPase GET3 of Candida tropicalis (strain ATCC MYA-3404 / T1) (Yeast).